We begin with the raw amino-acid sequence, 3003 residues long: MAX gene-associated protein (3003 aa).

Residues Lys-4 and Lys-178 each participate in a glycyl lysine isopeptide (Lys-Gly) (interchain with G-Cter in SUMO2) cross-link. A DNA-binding region (T-box) is located at residues Met-84 to Asp-260. Residues Arg-259–Ser-277 are compositionally biased toward basic and acidic residues. The tract at residues Arg-259–His-290 is disordered. Polar residues predominate over residues Asp-278–Pro-288. Residues Lys-323, Lys-329, Lys-348, Lys-431, Lys-458, Lys-463, and Lys-480 each participate in a glycyl lysine isopeptide (Lys-Gly) (interchain with G-Cter in SUMO2) cross-link. Residue Ser-531 is modified to Phosphoserine. The disordered stretch occupies residues Ile-553–Phe-647. A Glycyl lysine isopeptide (Lys-Gly) (interchain with G-Cter in SUMO2) cross-link involves residue Lys-567. Positions Lys-595–Thr-607 are enriched in polar residues. A Phosphoserine modification is found at Ser-604. Glycyl lysine isopeptide (Lys-Gly) (interchain with G-Cter in SUMO2) cross-links involve residues Lys-610, Lys-651, Lys-782, Lys-788, Lys-814, and Lys-823. Residues Lys-610–Lys-621 show a composition bias toward basic residues. Ser-848 carries the post-translational modification Phosphoserine. The span at Lys-871–Lys-913 shows a compositional bias: polar residues. Disordered stretches follow at residues Lys-871–Asn-946 and Leu-967–Lys-987. A Phosphoserine modification is found at Ser-921. Residue Lys-925 forms a Glycyl lysine isopeptide (Lys-Gly) (interchain with G-Cter in SUMO2) linkage. The segment covering Lys-937–Asn-946 has biased composition (polar residues). Over residues Gln-969–Gln-978 the composition is skewed to low complexity. Glycyl lysine isopeptide (Lys-Gly) (interchain with G-Cter in SUMO2) cross-links involve residues Lys-987 and Lys-1088. Positions Leu-1111 to Glu-1130 are disordered. The segment covering Glu-1113 to Arg-1122 has biased composition (basic and acidic residues). Residues Lys-1136, Lys-1158, Lys-1194, and Lys-1202 each participate in a glycyl lysine isopeptide (Lys-Gly) (interchain with G-Cter in SUMO2) cross-link. Disordered stretches follow at residues Gln-1186 to Ile-1215, Gln-1246 to Leu-1277, Ser-1297 to Gly-1323, and Arg-1376 to Pro-1424. Composition is skewed to low complexity over residues Gln-1248–Pro-1269 and Lys-1303–Ser-1315. Phosphoserine occurs at positions 1423 and 1450. Residues Lys-1454 and Lys-1495 each participate in a glycyl lysine isopeptide (Lys-Gly) (interchain with G-Cter in SUMO2) cross-link. 6 disordered regions span residues Ala-1476–Lys-1508, Pro-1722–Val-1746, Ile-1856–Thr-1885, Ile-1920–Asp-1954, Ser-1964–Leu-1983, and Thr-1988–Lys-2038. 3 stretches are compositionally biased toward polar residues: residues Leu-1488 to Gly-1507, Pro-1735 to Val-1746, and Pro-1859 to Gly-1880. Glycyl lysine isopeptide (Lys-Gly) (interchain with G-Cter in SUMO2) cross-links involve residues Lys-1937 and Lys-1944. A compositionally biased stretch (polar residues) spans Ser-1964 to Ser-1976. Glycyl lysine isopeptide (Lys-Gly) (interchain with G-Cter in SUMO2) cross-links involve residues Lys-2060 and Lys-2084. Positions Leu-2087 to Ser-2110 are disordered. Polar residues predominate over residues Ser-2088–Ala-2101. Residues Lys-2104, Lys-2152, and Lys-2179 each participate in a glycyl lysine isopeptide (Lys-Gly) (interchain with G-Cter in SUMO2) cross-link. Arg-2206 is subject to Omega-N-methylarginine. The tract at residues Gly-2207–Asp-2255 is disordered. Residues Glu-2220–Arg-2232 show a composition bias toward basic and acidic residues. Lys-2225 participates in a covalent cross-link: Glycyl lysine isopeptide (Lys-Gly) (interchain with G-Cter in SUMO2). The segment covering Asp-2242–Asp-2255 has biased composition (acidic residues). Residues Lys-2317, Lys-2352, Lys-2396, and Lys-2471 each participate in a glycyl lysine isopeptide (Lys-Gly) (interchain with G-Cter in SUMO2) cross-link. A bHLH domain is found at Tyr-2362–Leu-2413. Position 2480 is a phosphoserine (Ser-2480). Residues Lys-2515–Asn-2534 are disordered. The span at Thr-2520–Asn-2534 shows a compositional bias: polar residues. Glycyl lysine isopeptide (Lys-Gly) (interchain with G-Cter in SUMO2) cross-links involve residues Lys-2568 and Lys-2618. The span at Ser-2629–Lys-2651 shows a compositional bias: basic and acidic residues. Residues Ser-2629–Gly-2654 are disordered. A Glycyl lysine isopeptide (Lys-Gly) (interchain with G-Cter in SUMO2) cross-link involves residue Lys-2724. Residues Ser-2849 and Ser-2860 each carry the phosphoserine modification. The interval Leu-2877–Thr-2917 is disordered. A Glycyl lysine isopeptide (Lys-Gly) (interchain with G-Cter in SUMO2) cross-link involves residue Lys-2979.

As to quaternary structure, component of some MLL1/MLL complex, at least composed of the core components KMT2A/MLL1, ASH2L, HCFC1/HCF1, WDR5 and RBBP5, as well as the facultative components BACC1, CHD8, E2F6, HSP70, INO80C, KANSL1, LAS1L, MAX, MCRS1, MGA, MYST1/MOF, PELP1, PHF20, PRP31, RING2, RUVB1/TIP49A, RUVB2/TIP49B, SENP3, TAF1, TAF4, TAF6, TAF7, TAF9 and TEX10. Interacts with ZMYND11. Interacts with MAX. Requires heterodimerization with MAX for E-box binding. Highly expressed in germ cells and granulosa cells.

Its subcellular location is the nucleus. Functions as a dual-specificity transcription factor, regulating the expression of both MAX-network and T-box family target genes. Functions as a repressor or an activator. Binds to 5'-AATTTCACACCTAGGTGTGAAATT-3' core sequence and seems to regulate MYC-MAX target genes. Suppresses transcriptional activation by MYC and inhibits MYC-dependent cell transformation. Function activated by heterodimerization with MAX. This heterodimerization serves the dual function of both generating an E-box-binding heterodimer and simultaneously blocking interaction of a corepressor. This is MAX gene-associated protein from Mus musculus (Mouse).